Consider the following 192-residue polypeptide: Succinate dehydrogenase cytochrome b560 subunit, mitochondrial (192 aa).

A mitochondrion-targeting transit peptide spans methionine 1–asparagine 27. Residues tyrosine 48–proline 83 are Mitochondrial matrix-facing. Residues leucine 84 to alanine 113 traverse the membrane as a helical segment. Residues proline 114–leucine 131 lie on the Mitochondrial intermembrane side of the membrane. Residues valine 132 to tryptophan 156 traverse the membrane as a helical segment. Histidine 146 contributes to the heme b binding site. Residues aspartate 157–serine 164 are Mitochondrial matrix-facing. A helical membrane pass occupies residues isoleucine 165–phenylalanine 186. Residues threonine 187–valine 189 are Mitochondrial intermembrane-facing.

It belongs to the cytochrome b560 family. As to quaternary structure, component of complex II composed of four subunits: the flavoprotein (FP) sdha, iron-sulfur protein (IP) sdhb, and a cytochrome b560 composed of sdhc and sdhd. Heme b is required as a cofactor.

Its subcellular location is the mitochondrion inner membrane. It participates in carbohydrate metabolism; tricarboxylic acid cycle. Membrane-anchoring subunit of succinate dehydrogenase (SDH) that is involved in complex II of the mitochondrial electron transport chain and is responsible for transferring electrons from succinate to ubiquinone (coenzyme Q). The protein is Succinate dehydrogenase cytochrome b560 subunit, mitochondrial (sdhC) of Dictyostelium discoideum (Social amoeba).